The primary structure comprises 274 residues: HTH-type transcriptional regulator GadX (274 aa).

An HTH araC/xylS-type domain is found at 145 to 242 (TRVCTVINNN…GMTPTEYQER (98 aa)). 2 consecutive DNA-binding regions (H-T-H motif) follow at residues 162–183 (ARIA…REEE) and 209–232 (IKRV…RNYY).

In terms of assembly, homodimer.

In terms of biological role, positively regulates the expression of about fifteen genes involved in acid resistance such as gadA, gadB and gadC. Depending on the conditions (growth phase and medium), can repress gadW. This Escherichia coli O157:H7 protein is HTH-type transcriptional regulator GadX (gadX).